Reading from the N-terminus, the 365-residue chain is Outer membrane protein assembly factor BamC (365 aa).

A signal peptide spans methionine 1–glycine 19. A lipid anchor (N-palmitoyl cysteine) is attached at cysteine 20. Cysteine 20 carries S-diacylglycerol cysteine lipidation.

Belongs to the BamC family. In terms of assembly, part of the Bam complex.

The protein resides in the cell outer membrane. Its function is as follows. Part of the outer membrane protein assembly complex, which is involved in assembly and insertion of beta-barrel proteins into the outer membrane. This chain is Outer membrane protein assembly factor BamC, found in Ferrimonas balearica (strain DSM 9799 / CCM 4581 / KCTC 23876 / PAT).